The primary structure comprises 122 residues: Crustacean hyperglycemic hormones 5 (122 aa).

Positions M1 to A26 are cleaved as a signal peptide. Intrachain disulfides connect C55–C91, C71–C87, and C74–C100. V120 is modified (valine amide).

It belongs to the arthropod CHH/MIH/GIH/VIH hormone family.

Its subcellular location is the secreted. Hormone found in the sinus gland of isopods and decapods which controls the blood sugar level. Has a secretagogue action over the amylase released from the midgut gland. May act as a stress hormone and may be involved in the control of molting and reproduction. This is Crustacean hyperglycemic hormones 5 (CHH5) from Penaeus monodon (Giant tiger prawn).